The primary structure comprises 343 residues: MAGNCSWEAHPGNRNKMCPGLSEAPELYSRGFLTIEQIAMLPPPAVMNYIFLLLCLCGLVGNGLVLWFFGFSIKRNPFSIYFLHLASADVGYLFSKAVFSILNTGGFLGTFADYIRSVCRVLGLCMFLTGVSLLPAVSAERCASVIFPAWYWRRRPKRLSAVVCALLWVLSLLVTCLHNYFCVFLGRGAPGAACRHMDIFLGILLFLLCCPLMVLPCLALILHVECRARRRQRSAKLNHVILAMVSVFLVSSIYLGIDWFLFWVFQIPAPFPEYVTDLCICINSSAKPIVYFLAGRDKSQRLWEPLRVVFQRALRDGAELGEAGGSTPNTVTMEMQCPPGNAS.

At 1–44 the chain is on the extracellular side; the sequence is MAGNCSWEAHPGNRNKMCPGLSEAPELYSRGFLTIEQIAMLPPP. N4 carries N-linked (GlcNAc...) asparagine glycosylation. The helical transmembrane segment at 45–66 threads the bilayer; the sequence is AVMNYIFLLLCLCGLVGNGLVL. Residues 67 to 82 are Cytoplasmic-facing; that stretch reads WFFGFSIKRNPFSIYF. Residues 83–104 form a helical membrane-spanning segment; the sequence is LHLASADVGYLFSKAVFSILNT. At 105 to 123 the chain is on the extracellular side; the sequence is GGFLGTFADYIRSVCRVLG. Residues 124–144 form a helical membrane-spanning segment; the sequence is LCMFLTGVSLLPAVSAERCAS. Over 145–160 the chain is Cytoplasmic; sequence VIFPAWYWRRRPKRLS. A helical transmembrane segment spans residues 161 to 181; it reads AVVCALLWVLSLLVTCLHNYF. At 182 to 198 the chain is on the extracellular side; it reads CVFLGRGAPGAACRHMD. Residues 199-220 traverse the membrane as a helical segment; the sequence is IFLGILLFLLCCPLMVLPCLAL. The Cytoplasmic portion of the chain corresponds to 221 to 241; sequence ILHVECRARRRQRSAKLNHVI. The helical transmembrane segment at 242 to 263 threads the bilayer; it reads LAMVSVFLVSSIYLGIDWFLFW. Residues 264-273 are Extracellular-facing; it reads VFQIPAPFPE. The chain crosses the membrane as a helical span at residues 274–294; it reads YVTDLCICINSSAKPIVYFLA. The Cytoplasmic segment spans residues 295 to 343; sequence GRDKSQRLWEPLRVVFQRALRDGAELGEAGGSTPNTVTMEMQCPPGNAS. Residues 320 to 343 form a disordered region; that stretch reads LGEAGGSTPNTVTMEMQCPPGNAS.

Belongs to the G-protein coupled receptor 1 family. Mas subfamily.

It localises to the cell membrane. In terms of biological role, orphan receptor. May bind to a neuropeptide and may regulate nociceptor function and/or development, including the sensation or modulation of pain. The polypeptide is Mas-related G-protein coupled receptor member F (MRGPRF) (Homo sapiens (Human)).